A 128-amino-acid polypeptide reads, in one-letter code: Small ribosomal subunit protein bS16 (128 aa).

A disordered region spans residues 107-128 (AAEAKAAAANESDDSGTDSTES). The span at 117–128 (ESDDSGTDSTES) shows a compositional bias: acidic residues.

Belongs to the bacterial ribosomal protein bS16 family.

This Synechococcus sp. (strain CC9311) protein is Small ribosomal subunit protein bS16.